Here is a 332-residue protein sequence, read N- to C-terminus: C4-dicarboxylate-binding periplasmic protein DctP (332 aa).

Residues 1-22 (MFKPLTLIAASILAVTSFNAAA) form the signal peptide.

The protein belongs to the bacterial solute-binding protein 7 family. In terms of assembly, the complex comprises the extracytoplasmic solute receptor protein DctP, and the two transmembrane proteins DctQ and DctM.

It localises to the periplasm. Part of the tripartite ATP-independent periplasmic (TRAP) transport system DctPQM involved in C4-dicarboxylates uptake. In Vibrio cholerae serotype O1 (strain ATCC 39315 / El Tor Inaba N16961), this protein is C4-dicarboxylate-binding periplasmic protein DctP.